Consider the following 1054-residue polypeptide: Bifunctional glutamine synthetase adenylyltransferase/adenylyl-removing enzyme (1054 aa).

An adenylyl removase region spans residues 1–535; it reads MRKTLPSIGA…LHRKLFYRPL (535 aa). Composition is skewed to polar residues over residues 138-150 and 165-175; these read SFSSESQQPQGSD and DTANTDLSTPG. The disordered stretch occupies residues 138 to 175; it reads SFSSESQQPQGSDSDSEFSFGADLSADDTANTDLSTPG. An adenylyl transferase region spans residues 541-1054; that stretch reads NISVGTLKLS…WGVDSIEHDY (514 aa).

This sequence belongs to the GlnE family. Requires Mg(2+) as cofactor.

The catalysed reaction is [glutamine synthetase]-O(4)-(5'-adenylyl)-L-tyrosine + phosphate = [glutamine synthetase]-L-tyrosine + ADP. It catalyses the reaction [glutamine synthetase]-L-tyrosine + ATP = [glutamine synthetase]-O(4)-(5'-adenylyl)-L-tyrosine + diphosphate. Involved in the regulation of glutamine synthetase GlnA, a key enzyme in the process to assimilate ammonia. When cellular nitrogen levels are high, the C-terminal adenylyl transferase (AT) inactivates GlnA by covalent transfer of an adenylyl group from ATP to specific tyrosine residue of GlnA, thus reducing its activity. Conversely, when nitrogen levels are low, the N-terminal adenylyl removase (AR) activates GlnA by removing the adenylyl group by phosphorolysis, increasing its activity. The regulatory region of GlnE binds the signal transduction protein PII (GlnB) which indicates the nitrogen status of the cell. The polypeptide is Bifunctional glutamine synthetase adenylyltransferase/adenylyl-removing enzyme (Corynebacterium diphtheriae (strain ATCC 700971 / NCTC 13129 / Biotype gravis)).